An 864-amino-acid polypeptide reads, in one-letter code: Valine--tRNA ligase (864 aa).

The 'HIGH' region signature appears at 42–52 (PTISGKLHIGH). Positions 589-593 (KMSKS) match the 'KMSKS' region motif. K592 is a binding site for ATP.

It belongs to the class-I aminoacyl-tRNA synthetase family. ValS type 2 subfamily. In terms of assembly, monomer.

The protein localises to the cytoplasm. It carries out the reaction tRNA(Val) + L-valine + ATP = L-valyl-tRNA(Val) + AMP + diphosphate. In terms of biological role, catalyzes the attachment of valine to tRNA(Val). As ValRS can inadvertently accommodate and process structurally similar amino acids such as threonine, to avoid such errors, it has a 'posttransfer' editing activity that hydrolyzes mischarged Thr-tRNA(Val) in a tRNA-dependent manner. The polypeptide is Valine--tRNA ligase (Wolbachia pipientis wMel).